A 94-amino-acid polypeptide reads, in one-letter code: Large ribosomal subunit protein bL27 (94 aa).

The propeptide occupies 1-9; that stretch reads MLRLDLQFF.

This sequence belongs to the bacterial ribosomal protein bL27 family. In terms of assembly, part of the 50S ribosomal subunit. The N-terminus is cleaved by ribosomal processing cysteine protease Prp.

In terms of biological role, plays a role in sporulation at high temperatures. This chain is Large ribosomal subunit protein bL27 (rpmA), found in Bacillus subtilis (strain 168).